The chain runs to 248 residues: Aquaporin Z (248 aa).

The next 2 membrane-spanning stretches (helical) occupy residues 11–31 (FIGTFWLVLGGCGAAVLAAAF) and 36–56 (IGFAGVSLAFGLTLLTMAFAI). The NPA 1 signature appears at 65 to 67 (NPA). The next 3 membrane-spanning stretches (helical) occupy residues 87 to 107 (IAAQVLGGIAGAGVLYLIAGG), 132 to 152 (LLACLVCEVVMTFMFLMIILG), and 161 to 181 (GFAPIAIGLSLTLIHLISIPV). The NPA 2 signature appears at 187–189 (NPA). The chain crosses the membrane as a helical span at residues 203–223 (IAELWLFWLAPIVGAALAGLF).

The protein belongs to the MIP/aquaporin (TC 1.A.8) family. Homotetramer.

Its subcellular location is the cell inner membrane. It catalyses the reaction H2O(in) = H2O(out). Its function is as follows. Channel that permits osmotically driven movement of water in both directions. It is involved in the osmoregulation and in the maintenance of cell turgor during volume expansion in rapidly growing cells. It mediates rapid entry or exit of water in response to abrupt changes in osmolarity. In Gloeobacter violaceus (strain ATCC 29082 / PCC 7421), this protein is Aquaporin Z.